A 510-amino-acid polypeptide reads, in one-letter code: Beta-galactosidase (510 aa).

E210 acts as the Proton donor in catalysis. The active-site Nucleophile is the E414.

It belongs to the glycosyl hydrolase 1 family.

The catalysed reaction is Hydrolysis of terminal non-reducing beta-D-galactose residues in beta-D-galactosides.. The sequence is that of Beta-galactosidase from Pyrococcus woesei.